We begin with the raw amino-acid sequence, 396 residues long: Probable sugar efflux transporter (396 aa).

A run of 12 helical transmembrane segments spans residues 15–35 (VVTL…PVGL), 50–70 (VGIM…PFML), 81–101 (LICL…SWSF), 103–123 (VLVI…SITA), 136–156 (AQAL…GLPL), 170–190 (FFAI…LLPL), 209–229 (PALM…YTAY), 246–266 (FATA…VIFG), 275–295 (ALVS…LPAA), 299–319 (IHLG…GLGM), 333–353 (VAMA…ALVG), and 364–384 (MIGY…IIIF).

It belongs to the major facilitator superfamily. SotB (TC 2.A.1.2) family.

Its subcellular location is the cell inner membrane. In terms of biological role, involved in the efflux of sugars. The physiological role may be the reduction of the intracellular concentration of toxic sugars or sugar metabolites. This is Probable sugar efflux transporter from Shigella flexneri serotype 5b (strain 8401).